The sequence spans 342 residues: MDILKAEIARKRKQLEEKALVGGEKKYFKRSELTAKEKEEYFERCGYKMQKEEEEEKPSSSSNPVLELELAEEKLPMTLSRQEVIRRLRERGEPIRLFGETDYETFQRLRKIEILAPEVNKGLRNDLKAALDKIDQQYFNELVAGQETTDEDTQNDLKVHEENTTIEELEVLGECLGQGDDNKDMDTINKVLKFLLGVWAKELNAREDYVKRSVHGKLASATQKQTESYLKPLFRKLRKKNLPADIKESITDIIKFMLQREYVKANDAYLQMAIGNAPWPIGVTMVGIHARTGREKIFSKHVAHVLNDETQRKYIQGLKRLMTICQKYFSTDPSKCVEYNAL.

The protein belongs to the PRP18 family. As to quaternary structure, interacts with the spliceosome. Part of a complex containing U4/U6 snRNPs.

The protein localises to the nucleus speckle. Participates in the second step of pre-mRNA splicing. This chain is Pre-mRNA-splicing factor 18 (prpf18), found in Xenopus laevis (African clawed frog).